A 302-amino-acid polypeptide reads, in one-letter code: Urease accessory protein UreD 2 (302 aa).

It belongs to the UreD family. As to quaternary structure, ureD, UreF and UreG form a complex that acts as a GTP-hydrolysis-dependent molecular chaperone, activating the urease apoprotein by helping to assemble the nickel containing metallocenter of UreC. The UreE protein probably delivers the nickel.

Its subcellular location is the cytoplasm. Its function is as follows. Required for maturation of urease via the functional incorporation of the urease nickel metallocenter. In Brucella ovis (strain ATCC 25840 / 63/290 / NCTC 10512), this protein is Urease accessory protein UreD 2.